We begin with the raw amino-acid sequence, 181 residues long: Swi1-interacting protein swi3 (181 aa).

The interval 1-47 (MSTAASDSGVEKLVEENKREEVKKNEEEKEFDLGLEENPDSVKKPRK) is disordered. Residues 9 to 27 (GVEKLVEENKREEVKKNEE) show a composition bias toward basic and acidic residues. Residues 28–39 (EKEFDLGLEENP) are compositionally biased toward acidic residues.

Belongs to the CSM3 family. As to quaternary structure, fork protection complex (FPC) consisting of swi1 and swi3 interacts with mat1 cis-acting sequences and mat1-proximal polar-terminator of replication (RTS1).

It is found in the nucleus. In terms of biological role, forms a fork protection complex (FPC) with swi1. FPC coordinates leading and lagging strand synthesis and moves with the replication fork. It is required for programmed fork-pausing which is necessary for mating-type switching. FPC stabilizes replication forks in a configuration that is recognized by replication checkpoint sensors. It is involved in termination at the mat1-proximal polar-terminator of replication (RTS1) and also required for activation of the Rad53-like checkpoint kinase cds1. In Schizosaccharomyces pombe (strain 972 / ATCC 24843) (Fission yeast), this protein is Swi1-interacting protein swi3 (swi3).